We begin with the raw amino-acid sequence, 483 residues long: ATP synthase subunit beta (483 aa).

Position 162-169 (162-169 (GGAGVGKT)) interacts with ATP.

This sequence belongs to the ATPase alpha/beta chains family. In terms of assembly, F-type ATPases have 2 components, CF(1) - the catalytic core - and CF(0) - the membrane proton channel. CF(1) has five subunits: alpha(3), beta(3), gamma(1), delta(1), epsilon(1). CF(0) has four main subunits: a(1), b(1), b'(1) and c(9-12).

The protein resides in the cellular thylakoid membrane. The enzyme catalyses ATP + H2O + 4 H(+)(in) = ADP + phosphate + 5 H(+)(out). In terms of biological role, produces ATP from ADP in the presence of a proton gradient across the membrane. The catalytic sites are hosted primarily by the beta subunits. This chain is ATP synthase subunit beta, found in Prochloron didemni.